A 502-amino-acid polypeptide reads, in one-letter code: T-complex protein 11-like X-linked protein 1 (502 aa).

The disordered stretch occupies residues 1–36 (MPKTEETVLQNDPSVAENGAPEPKTPGQSQKSKSFC).

The protein belongs to the TCP11 family.

The protein is T-complex protein 11-like X-linked protein 1 of Homo sapiens (Human).